The chain runs to 167 residues: Transmembrane protein B169L (167 aa).

2 helical membrane passes run 28–48 (NPFI…FAIC) and 60–80 (TAIY…YVLN). An N-linked (GlcNAc...) asparagine; by host glycan is attached at asparagine 88.

It belongs to the asfivirus B169L family.

Its subcellular location is the host membrane. It localises to the virion. This African swine fever virus (isolate Tick/Malawi/Lil 20-1/1983) (ASFV) protein is Transmembrane protein B169L.